Reading from the N-terminus, the 256-residue chain is Protein FixA (256 aa).

This sequence belongs to the ETF beta-subunit/FixA family. As to quaternary structure, heterodimer of FixA and FixB.

Its pathway is amine and polyamine metabolism; carnitine metabolism. In terms of biological role, required for anaerobic carnitine reduction. May bring reductant to CaiA. The sequence is that of Protein FixA from Escherichia coli O81 (strain ED1a).